The primary structure comprises 224 residues: Protein DCL, chloroplastic (224 aa).

Residues 1 to 50 (MASICTSNFHFLCRKNNSSPISHHLLLSPSSLSFSRCGGLRLCRCAAVKT) constitute a chloroplast transit peptide. The disordered stretch occupies residues 76 to 98 (TTSESEELVKEESDDEVGKKSGD). Over residues 82–98 (ELVKEESDDEVGKKSGD) the composition is skewed to basic and acidic residues.

Its subcellular location is the plastid. It is found in the chloroplast. Has a function in the early stage of chloroplast development and palisade cell morphogenesis. Required for correct plastid ribosome assembly. Required for processing and maturation of 4.5S rRNA. This is Protein DCL, chloroplastic (DCL) from Solanum lycopersicum (Tomato).